The primary structure comprises 624 residues: Phosphomethylpyrimidine synthase (624 aa).

Residues 40 to 61 (VPMRKISQSDTPTNTGREKNPP) are disordered. Polar residues predominate over residues 45–54 (ISQSDTPTNT). Substrate contacts are provided by residues asparagine 229, methionine 258, tyrosine 287, histidine 323, 343 to 345 (SRG), 384 to 387 (DGLR), and glutamate 423. Histidine 427 contacts Zn(2+). A substrate-binding site is contributed by tyrosine 450. Residue histidine 491 coordinates Zn(2+). Positions 571, 574, and 579 each coordinate [4Fe-4S] cluster.

It belongs to the ThiC family. As to quaternary structure, homodimer. [4Fe-4S] cluster serves as cofactor.

The enzyme catalyses 5-amino-1-(5-phospho-beta-D-ribosyl)imidazole + S-adenosyl-L-methionine = 4-amino-2-methyl-5-(phosphooxymethyl)pyrimidine + CO + 5'-deoxyadenosine + formate + L-methionine + 3 H(+). The protein operates within cofactor biosynthesis; thiamine diphosphate biosynthesis. Functionally, catalyzes the synthesis of the hydroxymethylpyrimidine phosphate (HMP-P) moiety of thiamine from aminoimidazole ribotide (AIR) in a radical S-adenosyl-L-methionine (SAM)-dependent reaction. The protein is Phosphomethylpyrimidine synthase of Methylococcus capsulatus (strain ATCC 33009 / NCIMB 11132 / Bath).